The sequence spans 407 residues: Protein FAM53B (407 aa).

Disordered stretches follow at residues 204 to 286 and 306 to 380; these read SSSM…RPSL and ITGE…DTEP. Composition is skewed to basic and acidic residues over residues 264 to 281 and 327 to 339; these read LNEKKIGVKRRRPDDTHK and DAVDSPAHEHNLK. The Nuclear localization signal motif lies at 272–275; it reads KRRR. Positions 357 to 369 are enriched in acidic residues; it reads ITEEVDWNCDDGT.

It belongs to the FAM53 family. In terms of assembly, interacts with ctnnb1. In terms of tissue distribution, predominantly expressed in proliferating cells throughout embryonic development.

It localises to the nucleus. In terms of biological role, acts as a regulator of Wnt signaling pathway by regulating beta-catenin (ctnnb1) nuclear localization. The protein is Protein FAM53B of Oryzias latipes (Japanese rice fish).